We begin with the raw amino-acid sequence, 425 residues long: MKNTTLYTYRDYFVIRGGKPLTGKVKISGAKNAALPIMFATILTEEPCTITNVPDLLDVRNTLLLLRELGAELEFLNNTVFINPSINSFITNQEIIRRMRASVLSLGPLLGRFGRAVVGLPGGCSIGARPIDQHLKFFKEAGADVEVREGYVYVNLKEKRRVHFKFDLVTVTGTENALLYLASVPEESILENIALEPEVMDLIEVLKKMGAHVKVEGRSAYVKGSENLKGFTHSVIPDRIEAGTFMVGAVLTDGEILLENARINHLRAVVEKLKLIGGEVVEENGNLRVFRKESLRACDIETQVYPGFPTDMQAQFMALLSVAKGKSRIKENIFEHRFHHAQELNRLGANITVRGNTAYVEGVERLYGSEVYSTDLRASASLVLAGLVAQGETVVRDVYHLDRGYEKLEEKLKKLGADIERVSEL.

Residue 31 to 32 (KN) coordinates phosphoenolpyruvate. Arg-100 lines the UDP-N-acetyl-alpha-D-glucosamine pocket. Cys-124 functions as the Proton donor in the catalytic mechanism. A 2-(S-cysteinyl)pyruvic acid O-phosphothioketal modification is found at Cys-124. Residues 129–133 (RPIDQ), 170–172 (TVT), Asp-311, and Ile-333 each bind UDP-N-acetyl-alpha-D-glucosamine.

This sequence belongs to the EPSP synthase family. MurA subfamily.

Its subcellular location is the cytoplasm. It catalyses the reaction phosphoenolpyruvate + UDP-N-acetyl-alpha-D-glucosamine = UDP-N-acetyl-3-O-(1-carboxyvinyl)-alpha-D-glucosamine + phosphate. The protein operates within cell wall biogenesis; peptidoglycan biosynthesis. Cell wall formation. Adds enolpyruvyl to UDP-N-acetylglucosamine. This chain is UDP-N-acetylglucosamine 1-carboxyvinyltransferase, found in Aquifex aeolicus (strain VF5).